A 303-amino-acid chain; its full sequence is MTYAAEDFDYEGLPIGSPMYAHLLAGAFSGILEHSVMYPVDAIKTRMQMLNGVSRSVSGNIVNSVIKISSTEGVYSLWRGISSVIMGAGPSHAIYFSVLEFFKSKINASPDRPLASALAGACAITISDAFMTPFDVIKQRMQLPSRKYKSALHCATTVFRNEGLGAFYISYPTCIAMSIPFTAIQVATYDTCMSFLNPNAVYDPTSHIISGGLSGAIASSLTTPLDVVKTLLQTRGSSSIPEVRKCKGSLDVVRFIYNYGGIPSFFKGIRPRMVVAMPATAVSWAAYEAGKEILIRVSKTSQA.

Helical transmembrane passes span 12 to 32 (GLPI…SGIL), 81 to 101 (ISSV…VLEF), 117 to 137 (ALAG…FDVI), 174 to 194 (CIAM…TCMS), 208 to 228 (IISG…LDVV), and 265 to 286 (FFKG…SWAA). Solcar repeat units lie at residues 17 to 105 (SPMY…FKSK), 111 to 195 (DRPL…CMSF), and 206 to 293 (SHII…GKEI).

The protein belongs to the mitochondrial carrier (TC 2.A.29) family.

The protein resides in the mitochondrion inner membrane. This is an uncharacterized protein from Schizosaccharomyces pombe (strain 972 / ATCC 24843) (Fission yeast).